The chain runs to 574 residues: ATP synthase subunit beta, mitochondrial (574 aa).

The transit peptide at 1-26 (MLSSVRLAALRAGKTNSVFQAVRAFA) directs the protein to the mitochondrion. An ATP-binding site is contributed by 183–190 (GGAGVGKT).

It belongs to the ATPase alpha/beta chains family. F-type ATPases have 2 components, CF(1) - the catalytic core - and CF(0) - the membrane proton channel. CF(1) has five subunits: alpha(3), beta(3), gamma(1), delta(1), epsilon(1). CF(0) has three main subunits: a, b and c.

The protein localises to the mitochondrion. It localises to the mitochondrion inner membrane. The catalysed reaction is ATP + H2O + 4 H(+)(in) = ADP + phosphate + 5 H(+)(out). Mitochondrial membrane ATP synthase (F(1)F(0) ATP synthase or Complex V) produces ATP from ADP in the presence of a proton gradient across the membrane which is generated by electron transport complexes of the respiratory chain. F-type ATPases consist of two structural domains, F(1) - containing the extramembraneous catalytic core, and F(0) - containing the membrane proton channel, linked together by a central stalk and a peripheral stalk. During catalysis, ATP synthesis in the catalytic domain of F(1) is coupled via a rotary mechanism of the central stalk subunits to proton translocation. Subunits alpha and beta form the catalytic core in F(1). Rotation of the central stalk against the surrounding alpha(3)beta(3) subunits leads to hydrolysis of ATP in three separate catalytic sites on the beta subunits. The chain is ATP synthase subunit beta, mitochondrial (ATP2) from Chlamydomonas reinhardtii (Chlamydomonas smithii).